Reading from the N-terminus, the 296-residue chain is Tyrosine recombinase XerC (296 aa).

The region spanning 1–84 (MEKIQQAYLY…TLRSFYEYWM (84 aa)) is the Core-binding (CB) domain. In terms of domain architecture, Tyr recombinase spans 105-286 (YLPHFFYEEE…TNEQLRKVYL (182 aa)). Catalysis depends on residues Arg-145, Lys-169, His-238, Arg-241, and His-264. Tyr-273 acts as the O-(3'-phospho-DNA)-tyrosine intermediate in catalysis.

It belongs to the 'phage' integrase family. XerC subfamily. Forms a cyclic heterotetrameric complex composed of two molecules of XerC and two molecules of XerD.

It is found in the cytoplasm. In terms of biological role, site-specific tyrosine recombinase, which acts by catalyzing the cutting and rejoining of the recombining DNA molecules. The XerC-XerD complex is essential to convert dimers of the bacterial chromosome into monomers to permit their segregation at cell division. It also contributes to the segregational stability of plasmids. In Staphylococcus saprophyticus subsp. saprophyticus (strain ATCC 15305 / DSM 20229 / NCIMB 8711 / NCTC 7292 / S-41), this protein is Tyrosine recombinase XerC.